The sequence spans 104 residues: uncharacterized protein (104 aa).

2 consecutive transmembrane segments (helical) span residues 16–36 (LAFF…LASY) and 44–64 (GGFG…FLCI).

Its subcellular location is the cell membrane. This is an uncharacterized protein from Bacillus anthracis.